The sequence spans 339 residues: Dipeptide transport system permease protein DppB (339 aa).

The Periplasmic portion of the chain corresponds to 1 to 9 (MLQFILRRL). Residues 10 to 30 (GLVIPTFIGITLLTFAFVHMI) traverse the membrane as a helical segment. Residues 31–102 (PGDPVMIMAG…VPRFQATLEL (72 aa)) lie on the Cytoplasmic side of the membrane. The ABC transmembrane type-1 domain maps to 96–328 (FQATLELGVC…LVNLLVDLLY (233 aa)). A helical transmembrane segment spans residues 103–123 (GVCAMIFATAVGIPVGVLAAV). Residues 124–135 (KRGSIFDHTAVG) lie on the Periplasmic side of the membrane. Residues 136-156 (LALTGYSMPIFWWGMMLIMLV) form a helical membrane-spanning segment. At 157–171 (SVHWNLTPVSGRVSD) the chain is on the cytoplasmic side. The chain crosses the membrane as a helical span at residues 172-192 (MVFLDDSNPLTGFMLIDTAIW). At 193-200 (GEDGNFID) the chain is on the periplasmic side. A helical transmembrane segment spans residues 201-221 (AVAHMILPAIVLGTIPLAVIV). Residues 222–259 (RMTRSSMLEVLGEDYIRTARAKGLTRMRVIIVHALRNA) are Cytoplasmic-facing. A helical membrane pass occupies residues 260–280 (MLPVVTVIGLQVGTLLAGAIL). Topologically, residues 281-309 (TETIFSWPGLGRWLIDALQRRDYPVVQGG) are periplasmic. Residues 310–330 (VLLVATMIILVNLLVDLLYGV) traverse the membrane as a helical segment. At 331-339 (VNPRIRHKK) the chain is on the cytoplasmic side.

Belongs to the binding-protein-dependent transport system permease family. OppBC subfamily. In terms of assembly, the complex is composed of two ATP-binding proteins (DppD and DppF), two transmembrane proteins (DppB and DppC) and a solute-binding protein (DppA).

The protein resides in the cell inner membrane. In terms of biological role, part of the ABC transporter DppABCDF involved in dipeptide transport. Responsible for the translocation of the substrate across the membrane. The chain is Dipeptide transport system permease protein DppB (dppB) from Escherichia coli O157:H7.